The chain runs to 689 residues: Glycine--tRNA ligase beta subunit (689 aa).

The protein belongs to the class-II aminoacyl-tRNA synthetase family. In terms of assembly, tetramer of two alpha and two beta subunits.

Its subcellular location is the cytoplasm. The enzyme catalyses tRNA(Gly) + glycine + ATP = glycyl-tRNA(Gly) + AMP + diphosphate. This chain is Glycine--tRNA ligase beta subunit, found in Shewanella baltica (strain OS195).